The primary structure comprises 186 residues: Small ribosomal subunit protein uS5 (186 aa).

Residues phenylalanine 20–valine 83 form the S5 DRBM domain.

The protein belongs to the universal ribosomal protein uS5 family. Part of the 30S ribosomal subunit. Contacts proteins S4 and S8.

Functionally, with S4 and S12 plays an important role in translational accuracy. Its function is as follows. Located at the back of the 30S subunit body where it stabilizes the conformation of the head with respect to the body. This chain is Small ribosomal subunit protein uS5, found in Brucella anthropi (strain ATCC 49188 / DSM 6882 / CCUG 24695 / JCM 21032 / LMG 3331 / NBRC 15819 / NCTC 12168 / Alc 37) (Ochrobactrum anthropi).